The following is a 208-amino-acid chain: CASP-like protein 2U9 (208 aa).

The Cytoplasmic portion of the chain corresponds to 1-27 (MGVADAPSPGNVPVLGDMKNRSAAEMK). A helical membrane pass occupies residues 28–48 (ISVLALRALTLVLLVIALALM). Residues 49–87 (VSNKQTQSIPIKLPGMASTIFLKKTATFSQITGVQYYVG) lie on the Extracellular side of the membrane. Residues 88-108 (ALSVAVAYMFFQMLAGLFTIL) form a helical membrane-spanning segment. The Cytoplasmic segment spans residues 109–120 (TTGSIVGSKSRA). Residues 121–141 (WVTFILDQLIAYLMVSAATVV) form a helical membrane-spanning segment. At 142–168 (AEVGYIARRGETKVGWNQVCSDFKHYC) the chain is on the extracellular side. The helical transmembrane segment at 169 to 189 (FIYGFSLVNAFLATIAFLPVV) threads the bilayer. The Cytoplasmic portion of the chain corresponds to 190–208 (AVSAFHLFRMYGAQSAQSK).

It belongs to the Casparian strip membrane proteins (CASP) family. Homodimer and heterodimers.

It localises to the cell membrane. This is CASP-like protein 2U9 from Selaginella moellendorffii (Spikemoss).